Reading from the N-terminus, the 465-residue chain is Ribosomal oxygenase 2 (465 aa).

In terms of domain architecture, JmjC spans 139–271 (QPQRFKDELW…NSWGDFLLDT (133 aa)). Fe cation-binding residues include His-179, Asp-181, and His-240. A Phosphoserine modification is found at Ser-309.

The protein belongs to the ROX family. MINA53 subfamily. Fe(2+) is required as a cofactor. In terms of tissue distribution, expressed in liver, skeletal muscle, heart, pancreas, and placenta. Not detected in brain, lung or kidney. Expressed in several lung cancer tissues, but is barely detected in the adjacent non-cancerous tissues. Also highly expressed in several esophageal squamous cell carcinoma (ESCC), and colon cancer tissues, and in various cancer cell lines.

The protein resides in the nucleus. Its subcellular location is the nucleolus. The enzyme catalyses L-histidyl-[protein] + 2-oxoglutarate + O2 = (3S)-3-hydroxy-L-histidyl-[protein] + succinate + CO2. It carries out the reaction L-histidyl-[ribosomal protein uL15] + 2-oxoglutarate + O2 = (3S)-3-hydroxy-L-histidyl-[ribosomal protein uL15] + succinate + CO2. Its function is as follows. Oxygenase that can act as both a histone lysine demethylase and a ribosomal histidine hydroxylase. Is involved in the demethylation of trimethylated 'Lys-9' on histone H3 (H3K9me3), leading to an increase in ribosomal RNA expression. Also catalyzes the hydroxylation of 60S ribosomal protein L27a on 'His-39'. May play an important role in cell growth and survival. May be involved in ribosome biogenesis, most likely during the assembly process of pre-ribosomal particles. The polypeptide is Ribosomal oxygenase 2 (Homo sapiens (Human)).